The chain runs to 318 residues: 4-hydroxy-3-methylbut-2-enyl diphosphate reductase (318 aa).

Cysteine 12 contributes to the [4Fe-4S] cluster binding site. Histidine 41 and histidine 74 together coordinate (2E)-4-hydroxy-3-methylbut-2-enyl diphosphate. The dimethylallyl diphosphate site is built by histidine 41 and histidine 74. Residues histidine 41 and histidine 74 each coordinate isopentenyl diphosphate. A [4Fe-4S] cluster-binding site is contributed by cysteine 96. Residue histidine 124 coordinates (2E)-4-hydroxy-3-methylbut-2-enyl diphosphate. Histidine 124 contacts dimethylallyl diphosphate. Histidine 124 is an isopentenyl diphosphate binding site. Glutamate 126 acts as the Proton donor in catalysis. Position 167 (threonine 167) interacts with (2E)-4-hydroxy-3-methylbut-2-enyl diphosphate. A [4Fe-4S] cluster-binding site is contributed by cysteine 197. (2E)-4-hydroxy-3-methylbut-2-enyl diphosphate is bound by residues serine 225, serine 226, asparagine 227, and serine 269. Dimethylallyl diphosphate is bound by residues serine 225, serine 226, asparagine 227, and serine 269. Isopentenyl diphosphate is bound by residues serine 225, serine 226, asparagine 227, and serine 269.

It belongs to the IspH family. [4Fe-4S] cluster serves as cofactor.

The catalysed reaction is isopentenyl diphosphate + 2 oxidized [2Fe-2S]-[ferredoxin] + H2O = (2E)-4-hydroxy-3-methylbut-2-enyl diphosphate + 2 reduced [2Fe-2S]-[ferredoxin] + 2 H(+). The enzyme catalyses dimethylallyl diphosphate + 2 oxidized [2Fe-2S]-[ferredoxin] + H2O = (2E)-4-hydroxy-3-methylbut-2-enyl diphosphate + 2 reduced [2Fe-2S]-[ferredoxin] + 2 H(+). Its pathway is isoprenoid biosynthesis; dimethylallyl diphosphate biosynthesis; dimethylallyl diphosphate from (2E)-4-hydroxy-3-methylbutenyl diphosphate: step 1/1. The protein operates within isoprenoid biosynthesis; isopentenyl diphosphate biosynthesis via DXP pathway; isopentenyl diphosphate from 1-deoxy-D-xylulose 5-phosphate: step 6/6. Catalyzes the conversion of 1-hydroxy-2-methyl-2-(E)-butenyl 4-diphosphate (HMBPP) into a mixture of isopentenyl diphosphate (IPP) and dimethylallyl diphosphate (DMAPP). Acts in the terminal step of the DOXP/MEP pathway for isoprenoid precursor biosynthesis. The polypeptide is 4-hydroxy-3-methylbut-2-enyl diphosphate reductase (Francisella tularensis subsp. holarctica (strain LVS)).